The primary structure comprises 800 residues: Nucleolar complex protein 3 homolog (800 aa).

2 stretches are compositionally biased toward basic residues: residues 1–19 and 42–53; these read MGPA…RKLL and KKQRKEQRKLHK. 2 disordered regions span residues 1 to 91 and 167 to 197; these read MGPA…TDMM and KPVL…SAPL. Over residues 65–74 the composition is skewed to basic and acidic residues; that stretch reads PLERYKKRPE. The stretch at 449–490 forms a coiled coil; the sequence is SFKEKRKNLSRMQRKWKKAEEKLQKELLEAEATESKEKKIKL. The interval 780-800 is disordered; that stretch reads LQEEPEQMSLDFTSPHTQQEP. The span at 789 to 800 shows a compositional bias: polar residues; that stretch reads LDFTSPHTQQEP.

Belongs to the CBF/MAK21 family.

It is found in the nucleus. Its subcellular location is the nucleolus. In Danio rerio (Zebrafish), this protein is Nucleolar complex protein 3 homolog (noc3l).